The primary structure comprises 82 residues: Small ribosomal subunit protein bS18 (82 aa).

A disordered region spans residues 1–25 (MADTSSSQARRPFHRRRKTCPFSGA).

It belongs to the bacterial ribosomal protein bS18 family. In terms of assembly, part of the 30S ribosomal subunit. Forms a tight heterodimer with protein bS6.

Binds as a heterodimer with protein bS6 to the central domain of the 16S rRNA, where it helps stabilize the platform of the 30S subunit. The protein is Small ribosomal subunit protein bS18 of Agrobacterium fabrum (strain C58 / ATCC 33970) (Agrobacterium tumefaciens (strain C58)).